We begin with the raw amino-acid sequence, 375 residues long: Anhydro-N-acetylmuramic acid kinase (375 aa).

Residue 18–25 (GTSMDGID) participates in ATP binding.

Belongs to the anhydro-N-acetylmuramic acid kinase family.

It catalyses the reaction 1,6-anhydro-N-acetyl-beta-muramate + ATP + H2O = N-acetyl-D-muramate 6-phosphate + ADP + H(+). It participates in amino-sugar metabolism; 1,6-anhydro-N-acetylmuramate degradation. Its pathway is cell wall biogenesis; peptidoglycan recycling. Functionally, catalyzes the specific phosphorylation of 1,6-anhydro-N-acetylmuramic acid (anhMurNAc) with the simultaneous cleavage of the 1,6-anhydro ring, generating MurNAc-6-P. Is required for the utilization of anhMurNAc either imported from the medium or derived from its own cell wall murein, and thus plays a role in cell wall recycling. The sequence is that of Anhydro-N-acetylmuramic acid kinase from Rhodospirillum rubrum (strain ATCC 11170 / ATH 1.1.1 / DSM 467 / LMG 4362 / NCIMB 8255 / S1).